The following is a 147-amino-acid chain: Lysozyme C-2 (147 aa).

A signal peptide spans 1–18; it reads MKALVILGFLFLSVAVQG. A C-type lysozyme domain is found at 19-147; it reads KVFERCELAR…VSSYVEGCTL (129 aa). Disulfide bonds link cysteine 24–cysteine 145, cysteine 48–cysteine 133, cysteine 83–cysteine 99, and cysteine 95–cysteine 113. Catalysis depends on residues glutamate 53 and aspartate 71.

This sequence belongs to the glycosyl hydrolase 22 family. Monomer. In terms of tissue distribution, stomach-specific.

The enzyme catalyses Hydrolysis of (1-&gt;4)-beta-linkages between N-acetylmuramic acid and N-acetyl-D-glucosamine residues in a peptidoglycan and between N-acetyl-D-glucosamine residues in chitodextrins.. Its function is as follows. Lysozymes have primarily a bacteriolytic function; those in tissues and body fluids are associated with the monocyte-macrophage system and enhance the activity of immunoagents. The protein is Lysozyme C-2 (LYZ2) of Bos taurus (Bovine).